Consider the following 118-residue polypeptide: Large ribosomal subunit protein bL19 (118 aa).

Belongs to the bacterial ribosomal protein bL19 family.

In terms of biological role, this protein is located at the 30S-50S ribosomal subunit interface and may play a role in the structure and function of the aminoacyl-tRNA binding site. This chain is Large ribosomal subunit protein bL19, found in Helicobacter pylori (strain HPAG1).